The primary structure comprises 199 residues: Protein-methionine-sulfoxide reductase heme-binding subunit MsrQ (199 aa).

Helical transmembrane passes span 8–28 (IAWL…WLFW), 54–74 (FLLA…PLLI), 82–102 (LWCF…ELGI), 116–136 (PYLT…ATST), 149–169 (LLHN…LWSV), and 171–191 (IVSP…ACRY).

The protein belongs to the MsrQ family. As to quaternary structure, heterodimer of a catalytic subunit (MsrP) and a heme-binding subunit (MsrQ). FMN serves as cofactor. Requires heme b as cofactor.

Its subcellular location is the cell inner membrane. Its function is as follows. Part of the MsrPQ system that repairs oxidized periplasmic proteins containing methionine sulfoxide residues (Met-O), using respiratory chain electrons. Thus protects these proteins from oxidative-stress damage caused by reactive species of oxygen and chlorine generated by the host defense mechanisms. MsrPQ is essential for the maintenance of envelope integrity under bleach stress, rescuing a wide series of structurally unrelated periplasmic proteins from methionine oxidation. MsrQ provides electrons for reduction to the reductase catalytic subunit MsrP, using the quinone pool of the respiratory chain. The chain is Protein-methionine-sulfoxide reductase heme-binding subunit MsrQ from Klebsiella pneumoniae (strain 342).